The following is a 275-amino-acid chain: MANYTAADVKKLREITGAGMMSCKKALEEADGDFDKAVEFLRIKGAKDVGKRAERTAAEGLIAVSGNTMIEVNSETDFVAKNAEFKEFADKVAKAADEAKANSAEDLAAVNVDGTPAEEALQAFSAKIGEKLALRRATTIDGDNVAVYLHHRSADLPPAVGVMVAYEGEGDAAKEAAHNAAMQVAALKAKYLKREDVPSDIVEKERSIAEATSREEGKPEKALPKIVEGRLNGFFKDVVLLEQPSVADHKKTVKQLMDEAGVTLTGFRRYEVGQQ.

An involved in Mg(2+) ion dislocation from EF-Tu region spans residues T76–V79.

It belongs to the EF-Ts family.

Its subcellular location is the cytoplasm. Associates with the EF-Tu.GDP complex and induces the exchange of GDP to GTP. It remains bound to the aminoacyl-tRNA.EF-Tu.GTP complex up to the GTP hydrolysis stage on the ribosome. The polypeptide is Elongation factor Ts (Corynebacterium kroppenstedtii (strain DSM 44385 / JCM 11950 / CIP 105744 / CCUG 35717)).